Reading from the N-terminus, the 241-residue chain is Phosphoadenosine 5'-phosphosulfate reductase (241 aa).

Cys-235 serves as the catalytic Nucleophile; cysteine thiosulfonate intermediate.

The protein belongs to the PAPS reductase family. CysH subfamily.

Its subcellular location is the cytoplasm. It carries out the reaction [thioredoxin]-disulfide + sulfite + adenosine 3',5'-bisphosphate + 2 H(+) = [thioredoxin]-dithiol + 3'-phosphoadenylyl sulfate. Its pathway is sulfur metabolism; hydrogen sulfide biosynthesis; sulfite from sulfate: step 3/3. Functionally, catalyzes the formation of sulfite from phosphoadenosine 5'-phosphosulfate (PAPS) using thioredoxin as an electron donor. The sequence is that of Phosphoadenosine 5'-phosphosulfate reductase from Xanthomonas campestris pv. campestris (strain 8004).